We begin with the raw amino-acid sequence, 346 residues long: NADH-ubiquinone oxidoreductase chain 2 (346 aa).

The next 9 helical transmembrane spans lie at Ala7–Ile27, Tyr59–Trp79, Ile93–Phe115, Thr151–Asn171, Ile178–Pro198, Ile200–Asn220, Thr242–Pro262, Leu275–Leu294, and Leu325–Ile345.

It belongs to the complex I subunit 2 family.

Its subcellular location is the mitochondrion inner membrane. It carries out the reaction a ubiquinone + NADH + 5 H(+)(in) = a ubiquinol + NAD(+) + 4 H(+)(out). Its function is as follows. Core subunit of the mitochondrial membrane respiratory chain NADH dehydrogenase (Complex I) that is believed to belong to the minimal assembly required for catalysis. Complex I functions in the transfer of electrons from NADH to the respiratory chain. The immediate electron acceptor for the enzyme is believed to be ubiquinone. This Pelomedusa subrufa (African side-necked turtle) protein is NADH-ubiquinone oxidoreductase chain 2 (MT-ND2).